Consider the following 430-residue polypeptide: Dihydroorotase (430 aa).

The Zn(2+) site is built by H57 and H59. Substrate-binding positions include 59–61 (HLR) and N91. Positions 151, 178, and 231 each coordinate Zn(2+). N277 is a substrate binding site. D304 is a binding site for Zn(2+). D304 is an active-site residue. Residues H308 and 322-323 (PG) each bind substrate.

It belongs to the metallo-dependent hydrolases superfamily. DHOase family. Class I DHOase subfamily. Requires Zn(2+) as cofactor.

It carries out the reaction (S)-dihydroorotate + H2O = N-carbamoyl-L-aspartate + H(+). It functions in the pathway pyrimidine metabolism; UMP biosynthesis via de novo pathway; (S)-dihydroorotate from bicarbonate: step 3/3. Catalyzes the reversible cyclization of carbamoyl aspartate to dihydroorotate. This chain is Dihydroorotase, found in Mycobacterium leprae (strain TN).